Here is a 281-residue protein sequence, read N- to C-terminus: Complement C1q tumor necrosis factor-related protein 1 (281 aa).

The first 25 residues, 1–25, serve as a signal peptide directing secretion; that stretch reads MGSCAQGFMLGCCLLLAITWGPILS. The segment at 35–68 is disordered; it reads QEWEETEELPSPLDPVTRPEETREKYSPRQGEDL. A compositionally biased stretch (basic and acidic residues) spans 51 to 66; it reads TRPEETREKYSPRQGE. N-linked (GlcNAc...) asparagine glycosylation occurs at N93. Residues 99-140 form the Collagen-like domain; sequence GEKGDRGDRGLQGKYGKIGSTGPRGHVGPKGQKGSIGAPGNH. The tract at residues 107–136 is disordered; it reads RGLQGKYGKIGSTGPRGHVGPKGQKGSIGA. In terms of domain architecture, C1q spans 141 to 281; it reads CKSQYAAFSV…GYLVKPASEP (141 aa).

The protein resides in the secreted. This Mus musculus (Mouse) protein is Complement C1q tumor necrosis factor-related protein 1 (C1qtnf1).